Reading from the N-terminus, the 1135-residue chain is DNA-directed RNA polymerase I subunit RPA2 (1135 aa).

The tract at residues 1 to 26 is disordered; sequence MDVDGRWRNLPSGPSLKHLTDPSYGI. Arginine 180 lines the RNA pocket. The tract at residues 194-208 is loop B; that stretch reads VRPKWKSRGLGYTQF. The segment at 236–247 is loop A; that stretch reads LNFIYRKELFFL. An RNA-binding site is contributed by aspartate 367. Fork loop regions lie at residues 439 to 453 and 474 to 489; these read LRSK…DSGL and RGAA…VRRL. Aspartate 755 serves as a coordination point for Mg(2+). Residue lysine 890 coordinates RNA. Residues lysine 1020 and arginine 1036 each contribute to the DNA site. Phosphoserine is present on serine 1051. Residues cysteine 1070, cysteine 1073, cysteine 1098, and cysteine 1101 each coordinate Zn(2+). The C4-type zinc finger occupies 1070–1101; that stretch reads CVECGSLLSPLLEKPPPSWSAMRNRKYNCTVC.

The protein belongs to the RNA polymerase beta chain family. Component of the RNA polymerase I (Pol I) complex consisting of 13 subunits: a ten-subunit catalytic core composed of POLR1A/RPA1, POLR1B/RPA2, POLR1C/RPAC1, POLR1D/RPAC2, POLR1H/RPA12, POLR2E/RPABC1, POLR2F/RPABC2, POLR2H/RPABC3, POLR2K/RPABC4 and POLR2L/RPABC5; a mobile stalk subunit POLR1F/RPA43 protruding from the core and additional subunits homologous to general transcription factors POLR1E/RPA49 and POLR1G/RPA34. Part of Pol I pre-initiation complex (PIC), in which Pol I core assembles with RRN3 and promoter-bound UTBF and SL1/TIF-IB complex. The cofactor is Mg(2+).

It localises to the nucleus. The protein localises to the nucleolus. It is found in the chromosome. It carries out the reaction RNA(n) + a ribonucleoside 5'-triphosphate = RNA(n+1) + diphosphate. Catalytic core component of RNA polymerase I (Pol I), a DNA-dependent RNA polymerase which synthesizes ribosomal RNA precursors using the four ribonucleoside triphosphates as substrates. Transcribes 47S pre-rRNAs from multicopy rRNA gene clusters, giving rise to 5.8S, 18S and 28S ribosomal RNAs. Pol I-mediated transcription cycle proceeds through transcription initiation, transcription elongation and transcription termination stages. During transcription initiation, Pol I pre-initiation complex (PIC) is recruited by the selectivity factor 1 (SL1/TIF-IB) complex bound to the core promoter that precedes an rDNA repeat unit. The PIC assembly bends the promoter favoring the formation of the transcription bubble and promoter escape. Once the polymerase has escaped from the promoter it enters the elongation phase during which RNA is actively polymerized, based on complementarity with the template DNA strand. Highly processive, assembles in structures referred to as 'Miller trees' where many elongating Pol I complexes queue and transcribe the same rDNA coding regions. At terminator sequences downstream of the rDNA gene, PTRF interacts with Pol I and halts Pol I transcription leading to the release of the RNA transcript and polymerase from the DNA. Forms Pol I active center together with the largest subunit POLR1A/RPA1. Appends one nucleotide at a time to the 3' end of the nascent RNA, with POLR1A/RPA1 contributing a Mg(2+)-coordinating DxDGD motif, and POLR1B/RPA2 participating in the coordination of a second Mg(2+) ion and providing lysine residues believed to facilitate Watson-Crick base pairing between the incoming nucleotide and the template base. Typically, Mg(2+) ions direct a 5' nucleoside triphosphate to form a phosphodiester bond with the 3' hydroxyl of the preceding nucleotide of the nascent RNA, with the elimination of pyrophosphate. Has proofreading activity: Pauses and backtracks to allow the cleavage of a missincorporated nucleotide via POLR1H/RPA12. High Pol I processivity is associated with decreased transcription fidelity. This Mus musculus (Mouse) protein is DNA-directed RNA polymerase I subunit RPA2.